Reading from the N-terminus, the 365-residue chain is Protein RecA (365 aa).

Position 69 to 76 (69 to 76 (GPESSGKT)) interacts with ATP. Residues 344-365 (LDDNPDTDDHDVEDIDENTDEE) are disordered. The segment covering 347–365 (NPDTDDHDVEDIDENTDEE) has biased composition (acidic residues).

The protein belongs to the RecA family.

The protein localises to the cytoplasm. Can catalyze the hydrolysis of ATP in the presence of single-stranded DNA, the ATP-dependent uptake of single-stranded DNA by duplex DNA, and the ATP-dependent hybridization of homologous single-stranded DNAs. It interacts with LexA causing its activation and leading to its autocatalytic cleavage. The chain is Protein RecA from Arthrospira platensis (Spirulina platensis).